Here is a 101-residue protein sequence, read N- to C-terminus: Protein S100-A4 (101 aa).

N-acetylalanine is present on A2. K7 is modified (N6-acetyllysine). EF-hand domains are found at residues 12–47 (MVSTFHKYSGKEGDKFKLNKSELKELLTRELPSFLG) and 50–85 (TDEAAFQKLMSNLDSNRDNEVDFQEYCVFLSCIAMM). Positions 28 and 33 each coordinate Ca(2+). N6-acetyllysine is present on K35. D63, N65, D67, E69, and E74 together coordinate Ca(2+).

The protein belongs to the S-100 family. Homodimer. Interacts with PPFIBP1 in a calcium-dependent mode. Interacts with PGLYRP1; this complex acts as a chemoattractant that promotes lymphocyte movement. Interacts with MYH9; this interaction increases cell motility. Interacts with Annexin 2/ANXA2. Interacts with TP53; this interaction promotes TP53 degradation. Interacts with CCR5. Interacts with FCGR3A; this interaction inhibits PKC-dependent phosphorylation of FCGR3A. In terms of tissue distribution, ubiquitously expressed.

The protein resides in the secreted. It is found in the nucleus. Its subcellular location is the cytoplasm. Functionally, calcium-binding protein that plays a role in various cellular processes including motility, angiogenesis, cell differentiation, apoptosis, and autophagy. Increases cell motility and invasiveness by interacting with non-muscle myosin heavy chain (NMMHC) IIA/MYH9. Mechanistically, promotes filament depolymerization and increases the amount of soluble myosin-IIA, resulting in the formation of stable protrusions facilitating chemotaxis. Also modulates the pro-apoptotic function of TP53 by binding to its C-terminal transactivation domain within the nucleus and reducing its protein levels. Within the extracellular space, stimulates cytokine production including granulocyte colony-stimulating factor and CCL24 from T-lymphocytes. In addition, stimulates T-lymphocyte chemotaxis by acting as a chemoattractant complex with PGLYRP1 that promotes lymphocyte migration via CCR5 and CXCR3 receptors. The protein is Protein S100-A4 (S100A4) of Homo sapiens (Human).